Here is a 310-residue protein sequence, read N- to C-terminus: Methionyl-tRNA formyltransferase (310 aa).

109 to 112 is a (6S)-5,6,7,8-tetrahydrofolate binding site; the sequence is SLLP.

It belongs to the Fmt family.

It catalyses the reaction L-methionyl-tRNA(fMet) + (6R)-10-formyltetrahydrofolate = N-formyl-L-methionyl-tRNA(fMet) + (6S)-5,6,7,8-tetrahydrofolate + H(+). Functionally, attaches a formyl group to the free amino group of methionyl-tRNA(fMet). The formyl group appears to play a dual role in the initiator identity of N-formylmethionyl-tRNA by promoting its recognition by IF2 and preventing the misappropriation of this tRNA by the elongation apparatus. The sequence is that of Methionyl-tRNA formyltransferase from Pseudomonas entomophila (strain L48).